A 176-amino-acid chain; its full sequence is Large ribosomal subunit protein uL6 (176 aa).

Belongs to the universal ribosomal protein uL6 family. In terms of assembly, part of the 50S ribosomal subunit.

In terms of biological role, this protein binds to the 23S rRNA, and is important in its secondary structure. It is located near the subunit interface in the base of the L7/L12 stalk, and near the tRNA binding site of the peptidyltransferase center. This is Large ribosomal subunit protein uL6 from Lactobacillus gasseri (strain ATCC 33323 / DSM 20243 / BCRC 14619 / CIP 102991 / JCM 1131 / KCTC 3163 / NCIMB 11718 / NCTC 13722 / AM63).